The sequence spans 180 residues: Cytokinin-beta-glucosidase (180 aa).

Accumulates in young leaves and shoot tips.

Its function is as follows. Hydrolyzes cytokinin glucosides thus liberating free cytokinins. The sequence is that of Cytokinin-beta-glucosidase (TROLC) from Nicotiana tabacum (Common tobacco).